The following is a 263-amino-acid chain: Endonuclease 8 (263 aa).

The Schiff-base intermediate with DNA role is filled by Pro2. Residue Glu3 is the Proton donor of the active site. Residue Lys53 is the Proton donor; for beta-elimination activity of the active site. DNA is bound by residues Gln70, Arg125, and Asn169. An FPG-type zinc finger spans residues 229–263; it reads KVFHRDGELCERCGGIIEKTTLSSRPFYWCPGCQH. Catalysis depends on Arg253, which acts as the Proton donor; for delta-elimination activity.

The protein belongs to the FPG family. Requires Zn(2+) as cofactor.

The catalysed reaction is 2'-deoxyribonucleotide-(2'-deoxyribose 5'-phosphate)-2'-deoxyribonucleotide-DNA = a 3'-end 2'-deoxyribonucleotide-(2,3-dehydro-2,3-deoxyribose 5'-phosphate)-DNA + a 5'-end 5'-phospho-2'-deoxyribonucleoside-DNA + H(+). Involved in base excision repair of DNA damaged by oxidation or by mutagenic agents. Acts as a DNA glycosylase that recognizes and removes damaged bases. Has a preference for oxidized pyrimidines, such as thymine glycol, 5,6-dihydrouracil and 5,6-dihydrothymine. Has AP (apurinic/apyrimidinic) lyase activity and introduces nicks in the DNA strand. Cleaves the DNA backbone by beta-delta elimination to generate a single-strand break at the site of the removed base with both 3'- and 5'-phosphates. In Escherichia coli O7:K1 (strain IAI39 / ExPEC), this protein is Endonuclease 8.